The sequence spans 152 residues: Sulfur-rich protein (152 aa).

A disordered region spans residues methionine 1–serine 20. 2 consecutive transmembrane segments (helical) span residues valine 43–alanine 63 and alanine 69–leucine 89.

Its subcellular location is the membrane. This chain is Sulfur-rich protein (srp), found in Chlamydia trachomatis serovar A (strain ATCC VR-571B / DSM 19440 / HAR-13).